Consider the following 302-residue polypeptide: tRNA pseudouridine synthase B (302 aa).

D48 acts as the Nucleophile in catalysis.

Belongs to the pseudouridine synthase TruB family. Type 1 subfamily.

The enzyme catalyses uridine(55) in tRNA = pseudouridine(55) in tRNA. Its function is as follows. Responsible for synthesis of pseudouridine from uracil-55 in the psi GC loop of transfer RNAs. The protein is tRNA pseudouridine synthase B of Xylella fastidiosa (strain Temecula1 / ATCC 700964).